A 926-amino-acid polypeptide reads, in one-letter code: Ubiquitin carboxyl-terminal hydrolase 4 (926 aa).

The Rhodanese domain maps to 205–328 (SQMEILLIDI…WLKSNYGRQV (124 aa)). The residue at position 443 (Ser443) is a Phosphoserine. Residues 562-923 (VGLENLGNSC…NAYVLFYHRV (362 aa)) form the USP domain. The Nucleophile role is filled by Cys571. Residue His880 is the Proton acceptor of the active site.

Belongs to the peptidase C19 family. Interacts with BRO1, RFU1 and VPS32. Associates with the 26S proteasome.

It is found in the cytoplasm. Its subcellular location is the late endosome membrane. It carries out the reaction Thiol-dependent hydrolysis of ester, thioester, amide, peptide and isopeptide bonds formed by the C-terminal Gly of ubiquitin (a 76-residue protein attached to proteins as an intracellular targeting signal).. RFU1 is an inhibitor of deubiquitination activity. In terms of biological role, ubiquitin thioesterase that acts at the late endosome/prevacuolar compartment to recover ubiquitin from ubiquitinated membrane proteins en route to the vacuole. Also removes ubiquitin from soluble proteins targeted to proteasomes. Is essential to maintain a normal level of free ubiquitin. Involved in the ammonium-induced down-regulation of the GAP1 permease and the UME3 destruction in response to oxidative stress. Has a role in the RAD9 checkpoint response to TOP1 poisons. Required for promoting coordination of DNA replication and avoids DNA overreplication. The protein is Ubiquitin carboxyl-terminal hydrolase 4 (DOA4) of Saccharomyces cerevisiae (strain ATCC 204508 / S288c) (Baker's yeast).